A 123-amino-acid polypeptide reads, in one-letter code: Holo-[acyl-carrier-protein] synthase (123 aa).

Mg(2+) is bound by residues aspartate 8 and glutamate 50.

This sequence belongs to the P-Pant transferase superfamily. AcpS family. It depends on Mg(2+) as a cofactor.

It localises to the cytoplasm. It catalyses the reaction apo-[ACP] + CoA = holo-[ACP] + adenosine 3',5'-bisphosphate + H(+). Transfers the 4'-phosphopantetheine moiety from coenzyme A to a Ser of acyl-carrier-protein. The chain is Holo-[acyl-carrier-protein] synthase from Kocuria rhizophila (strain ATCC 9341 / DSM 348 / NBRC 103217 / DC2201).